Reading from the N-terminus, the 390-residue chain is 8-amino-7-oxononanoate synthase (390 aa).

Arg-19 contributes to the substrate binding site. 106–107 (GY) is a binding site for pyridoxal 5'-phosphate. Residue His-131 coordinates substrate. Residues Ser-176, His-204, and Thr-233 each contribute to the pyridoxal 5'-phosphate site. Lys-236 bears the N6-(pyridoxal phosphate)lysine mark. Thr-350 is a substrate binding site.

Belongs to the class-II pyridoxal-phosphate-dependent aminotransferase family. BioF subfamily. Homodimer. It depends on pyridoxal 5'-phosphate as a cofactor.

It carries out the reaction 6-carboxyhexanoyl-[ACP] + L-alanine + H(+) = (8S)-8-amino-7-oxononanoate + holo-[ACP] + CO2. It participates in cofactor biosynthesis; biotin biosynthesis. Functionally, catalyzes the decarboxylative condensation of pimeloyl-[acyl-carrier protein] and L-alanine to produce 8-amino-7-oxononanoate (AON), [acyl-carrier protein], and carbon dioxide. This is 8-amino-7-oxononanoate synthase from Pseudomonas putida (strain W619).